Here is a 448-residue protein sequence, read N- to C-terminus: MSQSTATYINVIGAGLAGSEAAYQIAKRGIPVKLYEMRGVKATPQHKTTNFAELVCSNSFRGDSLTNAVGLLKEEMRRLDSIIMRNGEANRVPAGGAMAVDREGYAKSVTAELENHPLIEVIRDEITEIPNDAITVIATGPLTSDALAEKIHAVNGGDGFYFYDAAAPIIDKSTIDMSKVYLKSRYDKGEAAYLNCPMTKEEFMAFHEALTTAEEAPLNSFEKEKYFEGCMPIEVMAKRGIKTMLYGPMKPVGLEYPDDYTGPRDGEFKTPYAVVQLRQDNAAGSLYNIVGFQTHLKWGEQKRVFQMIPGLENAEFVRYGVMHRNSYMDSPNLLTETFQSRSNPNLLFAGQMTGVEGYVESAASGLVAGINAARLFKREEALIFPQTTAIGSLPHYVTHADSKHFQPMNVNFGIIKELEGPRIRDKKERYEAIASRALADLDTCLASL.

13 to 18 provides a ligand contact to FAD; the sequence is GAGLAG.

Belongs to the MnmG family. TrmFO subfamily. FAD is required as a cofactor.

The protein localises to the cytoplasm. The catalysed reaction is uridine(54) in tRNA + (6R)-5,10-methylene-5,6,7,8-tetrahydrofolate + NADH + H(+) = 5-methyluridine(54) in tRNA + (6S)-5,6,7,8-tetrahydrofolate + NAD(+). The enzyme catalyses uridine(54) in tRNA + (6R)-5,10-methylene-5,6,7,8-tetrahydrofolate + NADPH + H(+) = 5-methyluridine(54) in tRNA + (6S)-5,6,7,8-tetrahydrofolate + NADP(+). Catalyzes the folate-dependent formation of 5-methyl-uridine at position 54 (M-5-U54) in all tRNAs. The sequence is that of Methylenetetrahydrofolate--tRNA-(uracil-5-)-methyltransferase TrmFO from Streptococcus pyogenes serotype M3 (strain ATCC BAA-595 / MGAS315).